A 162-amino-acid chain; its full sequence is ATP synthase subunit b (162 aa).

Residues Leu2–Leu22 form a helical membrane-spanning segment.

It belongs to the ATPase B chain family. As to quaternary structure, F-type ATPases have 2 components, F(1) - the catalytic core - and F(0) - the membrane proton channel. F(1) has five subunits: alpha(3), beta(3), gamma(1), delta(1), epsilon(1). F(0) has three main subunits: a(1), b(2) and c(10-14). The alpha and beta chains form an alternating ring which encloses part of the gamma chain. F(1) is attached to F(0) by a central stalk formed by the gamma and epsilon chains, while a peripheral stalk is formed by the delta and b chains.

The protein localises to the cell membrane. Functionally, f(1)F(0) ATP synthase produces ATP from ADP in the presence of a proton or sodium gradient. F-type ATPases consist of two structural domains, F(1) containing the extramembraneous catalytic core and F(0) containing the membrane proton channel, linked together by a central stalk and a peripheral stalk. During catalysis, ATP synthesis in the catalytic domain of F(1) is coupled via a rotary mechanism of the central stalk subunits to proton translocation. In terms of biological role, component of the F(0) channel, it forms part of the peripheral stalk, linking F(1) to F(0). The polypeptide is ATP synthase subunit b (Pelotomaculum thermopropionicum (strain DSM 13744 / JCM 10971 / SI)).